The sequence spans 209 residues: Uracil phosphoribosyltransferase (209 aa).

5-phospho-alpha-D-ribose 1-diphosphate is bound by residues Arg-79, Arg-104, and 131–139 (DPMLATGNS). Uracil-binding positions include Ile-194 and 199 to 201 (GDA). Asp-200 is a binding site for 5-phospho-alpha-D-ribose 1-diphosphate.

This sequence belongs to the UPRTase family. Mg(2+) serves as cofactor.

It carries out the reaction UMP + diphosphate = 5-phospho-alpha-D-ribose 1-diphosphate + uracil. The protein operates within pyrimidine metabolism; UMP biosynthesis via salvage pathway; UMP from uracil: step 1/1. Its activity is regulated as follows. Allosterically activated by GTP. Functionally, catalyzes the conversion of uracil and 5-phospho-alpha-D-ribose 1-diphosphate (PRPP) to UMP and diphosphate. In Delftia acidovorans (strain DSM 14801 / SPH-1), this protein is Uracil phosphoribosyltransferase.